Here is a 237-residue protein sequence, read N- to C-terminus: Leucyl/phenylalanyl-tRNA--protein transferase (237 aa).

Belongs to the L/F-transferase family.

It localises to the cytoplasm. It carries out the reaction N-terminal L-lysyl-[protein] + L-leucyl-tRNA(Leu) = N-terminal L-leucyl-L-lysyl-[protein] + tRNA(Leu) + H(+). The catalysed reaction is N-terminal L-arginyl-[protein] + L-leucyl-tRNA(Leu) = N-terminal L-leucyl-L-arginyl-[protein] + tRNA(Leu) + H(+). It catalyses the reaction L-phenylalanyl-tRNA(Phe) + an N-terminal L-alpha-aminoacyl-[protein] = an N-terminal L-phenylalanyl-L-alpha-aminoacyl-[protein] + tRNA(Phe). In terms of biological role, functions in the N-end rule pathway of protein degradation where it conjugates Leu, Phe and, less efficiently, Met from aminoacyl-tRNAs to the N-termini of proteins containing an N-terminal arginine or lysine. This Shewanella baltica (strain OS185) protein is Leucyl/phenylalanyl-tRNA--protein transferase.